A 275-amino-acid chain; its full sequence is WIMGHMVNEVYQIDEFVDLGANSIETDITFDDDAMAEYSYHGVPCDCKRWCHKWEYVNTFLDGLRRATTPGDSKYRKELSLVVFDLKTGDLSSSTAYKGGKLFGQKLLDRYWNGGNNGGRAYIILSIPDLDHYAFITGFKEALKNAGHEELLAKIGYDFSGNDDLGSTRTALNKAGIKDREHVWQSDGITNCIGRGLGRVRDAVRNRDSSNGYINKVYYWTIEKYVSVRDALDAEVDGIMTNEPDVIVNVLNEGNYRGRFRLATYDDNPWETFKR.

H5 is an active-site residue. 2 residues coordinate Mg(2+): E25 and D27. H41 acts as the Nucleophile in catalysis. Disulfide bonds link C45–C51 and C47–C192. D85 contributes to the Mg(2+) binding site.

It belongs to the arthropod phospholipase D family. Class II subfamily. Mg(2+) serves as cofactor. As to expression, expressed by the venom gland.

It is found in the secreted. The catalysed reaction is an N-(acyl)-sphingosylphosphocholine = an N-(acyl)-sphingosyl-1,3-cyclic phosphate + choline. It carries out the reaction an N-(acyl)-sphingosylphosphoethanolamine = an N-(acyl)-sphingosyl-1,3-cyclic phosphate + ethanolamine. It catalyses the reaction a 1-acyl-sn-glycero-3-phosphocholine = a 1-acyl-sn-glycero-2,3-cyclic phosphate + choline. The enzyme catalyses a 1-acyl-sn-glycero-3-phosphoethanolamine = a 1-acyl-sn-glycero-2,3-cyclic phosphate + ethanolamine. Functionally, dermonecrotic toxins cleave the phosphodiester linkage between the phosphate and headgroup of certain phospholipids (sphingolipid and lysolipid substrates), forming an alcohol (often choline) and a cyclic phosphate. This toxin acts on sphingomyelin (SM). It may also act on ceramide phosphoethanolamine (CPE), lysophosphatidylcholine (LPC) and lysophosphatidylethanolamine (LPE), but not on lysophosphatidylserine (LPS), and lysophosphatidylglycerol (LPG). It acts by transphosphatidylation, releasing exclusively cyclic phosphate products as second products. Induces dermonecrosis, hemolysis, increased vascular permeability, edema, inflammatory response, and platelet aggregation. In Loxosceles hirsuta (Recluse spider), this protein is Dermonecrotic toxin LhSicTox-alphaIV2.